The chain runs to 1020 residues: Fanconi-associated nuclease 1 (1020 aa).

A compositionally biased stretch (basic and acidic residues) spans 1 to 11 (MPSQRKSPDQK). Residues 1–24 (MPSQRKSPDQKRPRRSLSTSKTAK) are disordered. A D-box motif is present at residues 14–22 (RRSLSTSKT). The UBZ4-type zinc finger occupies 41–69 (KLACSTCHKMVPRYDLIRHLDESCANNGV). Residues C44, C47, H59, and C64 each contribute to the Zn(2+) site. The segment at 173–208 (KNEGLASQCPQTSPSTPGTSLTDNCPEMEDKDEVLN) is disordered. Positions 180–195 (QCPQTSPSTPGTSLTD) are enriched in polar residues. The KEN box signature appears at 212-214 (KEN). Positions 224 to 242 (ENASEQKVKNNKITGDESQ) are enriched in basic and acidic residues. Disordered regions lie at residues 224-252 (ENAS…PALT) and 269-288 (LVSN…ESAR). Residues 269 to 278 (LVSNTKSSPG) are compositionally biased toward polar residues. Residues 673–737 (SSRAVEVLER…AIRCIREGLA (65 aa)) adopt a coiled-coil conformation. Mn(2+)-binding residues include E837, D963, E978, and V979. In terms of domain architecture, VRR-NUC spans 898–1010 (AESLRAWVGE…GADVEVCHVV (113 aa)).

The protein belongs to the FAN1 family. Interacts with FANCD2 (when monoubiquitinated). Interacts with FANCI, MLH1, MLH3 and PMS2. Mn(2+) is required as a cofactor. The cofactor is Mg(2+). Ubiquitinated and degraded during mitotic exit by the APC/C-Cdh1 complex.

The protein resides in the nucleus. The enzyme catalyses Hydrolytically removes 5'-nucleotides successively from the 3'-hydroxy termini of 3'-hydroxy-terminated oligonucleotides.. Functionally, nuclease required for the repair of DNA interstrand cross-links (ICL) recruited at sites of DNA damage by monoubiquitinated FANCD2. Specifically involved in repair of ICL-induced DNA breaks by being required for efficient homologous recombination, probably in the resolution of homologous recombination intermediates. Not involved in DNA double-strand breaks resection. Acts as a 5'-3' exonuclease that anchors at a cut end of DNA and cleaves DNA successively at every third nucleotide, allowing to excise an ICL from one strand through flanking incisions. Probably keeps excising with 3'-flap annealing until it reaches and unhooks the ICL. Acts at sites that have a 5'-terminal phosphate anchor at a nick or a 1- or 2-nucleotide flap and is augmented by a 3' flap. Also has endonuclease activity toward 5'-flaps. This chain is Fanconi-associated nuclease 1, found in Mus musculus (Mouse).